The primary structure comprises 229 residues: UPF0173 metal-dependent hydrolase Hbut_0886 (229 aa).

This sequence belongs to the UPF0173 family.

This is UPF0173 metal-dependent hydrolase Hbut_0886 from Hyperthermus butylicus (strain DSM 5456 / JCM 9403 / PLM1-5).